Reading from the N-terminus, the 63-residue chain is Conotoxin Cl14.11 (63 aa).

The first 21 residues, 1-21 (MRFLLLLTVALLLTCIMETDA), serve as a signal peptide directing secretion. The propeptide occupies 22-34 (EAKPEDLAERFRE).

Contains 2 disulfide bond. In terms of tissue distribution, expressed by the venom duct.

The protein resides in the secreted. The polypeptide is Conotoxin Cl14.11 (Californiconus californicus (California cone)).